The following is a 285-amino-acid chain: Bifunctional protein FolD (285 aa).

NADP(+)-binding positions include 164 to 166 (GRS), Ser-193, and Ile-234.

The protein belongs to the tetrahydrofolate dehydrogenase/cyclohydrolase family. As to quaternary structure, homodimer.

The catalysed reaction is (6R)-5,10-methylene-5,6,7,8-tetrahydrofolate + NADP(+) = (6R)-5,10-methenyltetrahydrofolate + NADPH. The enzyme catalyses (6R)-5,10-methenyltetrahydrofolate + H2O = (6R)-10-formyltetrahydrofolate + H(+). Its pathway is one-carbon metabolism; tetrahydrofolate interconversion. Catalyzes the oxidation of 5,10-methylenetetrahydrofolate to 5,10-methenyltetrahydrofolate and then the hydrolysis of 5,10-methenyltetrahydrofolate to 10-formyltetrahydrofolate. The protein is Bifunctional protein FolD of Desulfovibrio desulfuricans (strain ATCC 27774 / DSM 6949 / MB).